A 313-amino-acid chain; its full sequence is 4-diphosphocytidyl-2-C-methyl-D-erythritol kinase (313 aa).

The active site involves K27. Residue 110–120 (PIGGGVGGGSS) participates in ATP binding. Residue D152 is part of the active site.

This sequence belongs to the GHMP kinase family. IspE subfamily.

The catalysed reaction is 4-CDP-2-C-methyl-D-erythritol + ATP = 4-CDP-2-C-methyl-D-erythritol 2-phosphate + ADP + H(+). It participates in isoprenoid biosynthesis; isopentenyl diphosphate biosynthesis via DXP pathway; isopentenyl diphosphate from 1-deoxy-D-xylulose 5-phosphate: step 3/6. Functionally, catalyzes the phosphorylation of the position 2 hydroxy group of 4-diphosphocytidyl-2C-methyl-D-erythritol. The sequence is that of 4-diphosphocytidyl-2-C-methyl-D-erythritol kinase from Histophilus somni (strain 129Pt) (Haemophilus somnus).